A 172-amino-acid chain; its full sequence is Xanthine-guanine phosphoribosyltransferase (172 aa).

5-phospho-alpha-D-ribose 1-diphosphate contacts are provided by residues 47 to 48 (RG) and 106 to 114 (DDLVDTGKT). A Mg(2+)-binding site is contributed by D107. D110 and I153 together coordinate guanine. 2 residues coordinate xanthine: D110 and I153. GMP is bound by residues 110 to 114 (DTGKT) and 152 to 153 (WI).

Belongs to the purine/pyrimidine phosphoribosyltransferase family. XGPT subfamily. In terms of assembly, homotetramer. Requires Mg(2+) as cofactor.

Its subcellular location is the cell inner membrane. The catalysed reaction is GMP + diphosphate = guanine + 5-phospho-alpha-D-ribose 1-diphosphate. It catalyses the reaction XMP + diphosphate = xanthine + 5-phospho-alpha-D-ribose 1-diphosphate. It carries out the reaction IMP + diphosphate = hypoxanthine + 5-phospho-alpha-D-ribose 1-diphosphate. It functions in the pathway purine metabolism; GMP biosynthesis via salvage pathway; GMP from guanine: step 1/1. The protein operates within purine metabolism; XMP biosynthesis via salvage pathway; XMP from xanthine: step 1/1. Purine salvage pathway enzyme that catalyzes the transfer of the ribosyl-5-phosphate group from 5-phospho-alpha-D-ribose 1-diphosphate (PRPP) to the N9 position of the 6-oxopurines guanine and xanthine to form the corresponding ribonucleotides GMP (guanosine 5'-monophosphate) and XMP (xanthosine 5'-monophosphate), with the release of PPi. To a lesser extent, also acts on hypoxanthine. The protein is Xanthine-guanine phosphoribosyltransferase of Rhodopseudomonas palustris (strain BisB5).